A 188-amino-acid polypeptide reads, in one-letter code: Ribosomal RNA small subunit methyltransferase G (188 aa).

S-adenosyl-L-methionine is bound by residues glycine 69, phenylalanine 74, 119 to 120, and arginine 134; that span reads VQ.

This sequence belongs to the methyltransferase superfamily. RNA methyltransferase RsmG family.

Its subcellular location is the cytoplasm. It catalyses the reaction guanosine(527) in 16S rRNA + S-adenosyl-L-methionine = N(7)-methylguanosine(527) in 16S rRNA + S-adenosyl-L-homocysteine. In terms of biological role, specifically methylates the N7 position of guanine in position 527 of 16S rRNA. In Campylobacter jejuni subsp. jejuni serotype O:2 (strain ATCC 700819 / NCTC 11168), this protein is Ribosomal RNA small subunit methyltransferase G.